The sequence spans 194 residues: dTTP/UTP pyrophosphatase (194 aa).

Aspartate 76 (proton acceptor) is an active-site residue.

This sequence belongs to the Maf family. YhdE subfamily. A divalent metal cation serves as cofactor.

Its subcellular location is the cytoplasm. It carries out the reaction dTTP + H2O = dTMP + diphosphate + H(+). The catalysed reaction is UTP + H2O = UMP + diphosphate + H(+). In terms of biological role, nucleoside triphosphate pyrophosphatase that hydrolyzes dTTP and UTP. May have a dual role in cell division arrest and in preventing the incorporation of modified nucleotides into cellular nucleic acids. The polypeptide is dTTP/UTP pyrophosphatase (Shewanella oneidensis (strain ATCC 700550 / JCM 31522 / CIP 106686 / LMG 19005 / NCIMB 14063 / MR-1)).